A 319-amino-acid chain; its full sequence is Probable metallo-hydrolase YqjP (319 aa).

Zn(2+) contacts are provided by H67, H69, D71, H72, H165, D184, and H231.

The protein belongs to the metallo-beta-lactamase superfamily. It depends on Zn(2+) as a cofactor.

In Bacillus subtilis (strain 168), this protein is Probable metallo-hydrolase YqjP (yqjP).